The primary structure comprises 248 residues: Large ribosomal subunit protein uL4 (248 aa).

Disordered stretches follow at residues 48–95 and 210–248; these read GTHK…GPVP and AFSEDRDNPGTSLPKSPTPEDSSDATKARSSRHDDRTGA. Basic and acidic residues predominate over residues 233–248; sequence DATKARSSRHDDRTGA.

It belongs to the universal ribosomal protein uL4 family. Part of the 50S ribosomal subunit.

Its function is as follows. One of the primary rRNA binding proteins, this protein initially binds near the 5'-end of the 23S rRNA. It is important during the early stages of 50S assembly. It makes multiple contacts with different domains of the 23S rRNA in the assembled 50S subunit and ribosome. In terms of biological role, forms part of the polypeptide exit tunnel. This is Large ribosomal subunit protein uL4 from Tropheryma whipplei (strain TW08/27) (Whipple's bacillus).